We begin with the raw amino-acid sequence, 291 residues long: uncharacterized protein (291 aa).

Residues 1 to 58 enclose the HTH lysR-type domain; it reads MDLKWLQTFIAAAESESFREAAEHLYLTQPAVSQHMRKLEDELDMRLFLHSGRRVVLT. The H-T-H motif DNA-binding region spans 18 to 37; sequence FREAAEHLYLTQPAVSQHMR.

The protein belongs to the LysR transcriptional regulatory family.

This is an uncharacterized protein from Bacillus subtilis (strain 168).